Consider the following 344-residue polypeptide: Holliday junction branch migration complex subunit RuvB (344 aa).

The tract at residues 1–182 (MSDRLISATA…FGIISRLEFY (182 aa)) is large ATPase domain (RuvB-L). ATP is bound by residues Leu-21, Arg-22, Gly-63, Lys-66, Thr-67, Thr-68, 129 to 131 (EDF), Arg-172, Tyr-182, and Arg-219. Residue Thr-67 coordinates Mg(2+). The segment at 183 to 253 (NNEDLTRIVT…VAAEALEFFE (71 aa)) is small ATPAse domain (RuvB-S). Residues 256–344 (PLGLDHTDRR…QKGLEQNSLF (89 aa)) form a head domain (RuvB-H) region. DNA-binding residues include Arg-311 and Arg-316.

The protein belongs to the RuvB family. In terms of assembly, homohexamer. Forms an RuvA(8)-RuvB(12)-Holliday junction (HJ) complex. HJ DNA is sandwiched between 2 RuvA tetramers; dsDNA enters through RuvA and exits via RuvB. An RuvB hexamer assembles on each DNA strand where it exits the tetramer. Each RuvB hexamer is contacted by two RuvA subunits (via domain III) on 2 adjacent RuvB subunits; this complex drives branch migration. In the full resolvosome a probable DNA-RuvA(4)-RuvB(12)-RuvC(2) complex forms which resolves the HJ.

It is found in the cytoplasm. The catalysed reaction is ATP + H2O = ADP + phosphate + H(+). The RuvA-RuvB-RuvC complex processes Holliday junction (HJ) DNA during genetic recombination and DNA repair, while the RuvA-RuvB complex plays an important role in the rescue of blocked DNA replication forks via replication fork reversal (RFR). RuvA specifically binds to HJ cruciform DNA, conferring on it an open structure. The RuvB hexamer acts as an ATP-dependent pump, pulling dsDNA into and through the RuvAB complex. RuvB forms 2 homohexamers on either side of HJ DNA bound by 1 or 2 RuvA tetramers; 4 subunits per hexamer contact DNA at a time. Coordinated motions by a converter formed by DNA-disengaged RuvB subunits stimulates ATP hydrolysis and nucleotide exchange. Immobilization of the converter enables RuvB to convert the ATP-contained energy into a lever motion, pulling 2 nucleotides of DNA out of the RuvA tetramer per ATP hydrolyzed, thus driving DNA branch migration. The RuvB motors rotate together with the DNA substrate, which together with the progressing nucleotide cycle form the mechanistic basis for DNA recombination by continuous HJ branch migration. Branch migration allows RuvC to scan DNA until it finds its consensus sequence, where it cleaves and resolves cruciform DNA. This chain is Holliday junction branch migration complex subunit RuvB, found in Desulforamulus reducens (strain ATCC BAA-1160 / DSM 100696 / MI-1) (Desulfotomaculum reducens).